The following is a 430-amino-acid chain: Glutamate-1-semialdehyde 2,1-aminomutase 2 (430 aa).

Lys-269 carries the post-translational modification N6-(pyridoxal phosphate)lysine.

The protein belongs to the class-III pyridoxal-phosphate-dependent aminotransferase family. HemL subfamily. Homodimer. Pyridoxal 5'-phosphate is required as a cofactor.

The protein resides in the cytoplasm. The catalysed reaction is (S)-4-amino-5-oxopentanoate = 5-aminolevulinate. It participates in porphyrin-containing compound metabolism; protoporphyrin-IX biosynthesis; 5-aminolevulinate from L-glutamyl-tRNA(Glu): step 2/2. The chain is Glutamate-1-semialdehyde 2,1-aminomutase 2 from Bacillus pumilus (strain SAFR-032).